The chain runs to 224 residues: UPF0758 protein XF_0148 (224 aa).

Positions 102 to 224 (SIHDPISAGR…PVSFAEHGWL (123 aa)) constitute an MPN domain. Zn(2+) contacts are provided by His173, His175, and Asp186. The short motif at 173–186 (HNHPSGNREPSPAD) is the JAMM motif element.

This sequence belongs to the UPF0758 family.

This Xylella fastidiosa (strain 9a5c) protein is UPF0758 protein XF_0148.